The following is a 638-amino-acid chain: Growth hormone receptor (638 aa).

Residues 1-18 form the signal peptide; sequence MDLWQLLLTLAVAGSGNA. The Extracellular segment spans residues 19 to 264; that stretch reads VSGSEATPAI…SPFACEEDFQ (246 aa). 2 cysteine pairs are disulfide-bonded: C56–C66 and C101–C112. N115 carries an N-linked (GlcNAc...) asparagine glycan. C126 and C140 are disulfide-bonded. The region spanning 151–254 is the Fibronectin type-III domain; that stretch reads PPIGLNWTLL…EVLYVALPQM (104 aa). N-linked (GlcNAc...) asparagine glycosylation is found at N156, N161, and N200. A WSXWS motif motif is present at residues 240 to 244; it reads YGEFS. A helical transmembrane segment spans residues 265 to 288; that stretch reads FPWFLIIIFGIFGLTMILFLFIFS. Residues 289 to 638 are Cytoplasmic-facing; that stretch reads KQQRIKMLIL…STDQLNKIMP (350 aa). Residues 294-379 form a required for JAK2 binding region; it reads KMLILPPVPV…HEKSLNILGA (86 aa). The Box 1 motif motif lies at 297-305; sequence ILPPVPVPK. Positions 340–349 match the UbE motif motif; that stretch reads DSWVEFIELD. Residue S341 is modified to Phosphoserine. Polar residues predominate over residues 429-446; it reads KNQSNSPSTDTAPNTQQP. The interval 429–448 is disordered; the sequence is KNQSNSPSTDTAPNTQQPGV. A phosphotyrosine mark is found at Y487 and Y595.

Belongs to the type I cytokine receptor family. Type 1 subfamily. In terms of assembly, on growth hormone (GH) binding, forms homodimers and binds JAK2 via a box 1-containing domain. In terms of processing, the soluble form (GHBP) is produced by phorbol ester-promoted proteolytic cleavage at the cell surface (shedding) by ADAM17/TACE. Shedding is inhibited by growth hormone (GH) binding to the receptor probably due to a conformational change in GHR rendering the receptor inaccessible to ADAM17. Post-translationally, on GH binding, phosphorylated on tyrosine residues in the cytoplasmic domain by JAK2. Ubiquitinated by the ECS(SOCS2) complex following ligand-binding and phosphorylation by JAK2, leading to its degradation by the proteasome. Regulation by the ECS(SOCS2) complex acts as a negative feedback loop of growth hormone receptor signaling. Ubiquitination is not sufficient for GHR internalization.

It is found in the cell membrane. The protein localises to the secreted. In terms of biological role, receptor for pituitary gland growth hormone (GH1) involved in regulating postnatal body growth. On ligand binding, couples to the JAK2/STAT5 pathway. Functionally, the soluble form (GHBP) acts as a reservoir of growth hormone in plasma and may be a modulator/inhibitor of GH signaling. The protein is Growth hormone receptor (GHR) of Ailuropoda melanoleuca (Giant panda).